We begin with the raw amino-acid sequence, 170 residues long: Tubulin polymerization-promoting protein family member 2 (170 aa).

A disordered region spans residues 127–147; it reads TGTHKERFDESGKGKGIAGRE. The segment covering 129–139 has biased composition (basic and acidic residues); it reads THKERFDESGK.

The protein belongs to the TPPP family.

The protein resides in the cytoplasm. The protein localises to the cytosol. It is found in the cell projection. It localises to the cilium. Its subcellular location is the flagellum. Its function is as follows. Probable regulator of microtubule dynamics required for sperm motility. In contrast to other members of the family, has no microtubule bundling activity. The chain is Tubulin polymerization-promoting protein family member 2 (TPPP2) from Macaca fascicularis (Crab-eating macaque).